The primary structure comprises 289 residues: 4-hydroxybenzoate octaprenyltransferase (289 aa).

The next 7 membrane-spanning stretches (helical) occupy residues 33–53 (LWAL…AVFV), 99–119 (LFVV…TMTI), 141–161 (LPQV…FAAV), 163–183 (ESVP…AVAY), 213–233 (LIIG…GRLN), 238–258 (EFYW…KLIV), and 268–288 (AFLN…MSYW).

The protein belongs to the UbiA prenyltransferase family. Mg(2+) serves as cofactor.

The protein resides in the cell inner membrane. The enzyme catalyses all-trans-octaprenyl diphosphate + 4-hydroxybenzoate = 4-hydroxy-3-(all-trans-octaprenyl)benzoate + diphosphate. Its pathway is cofactor biosynthesis; ubiquinone biosynthesis. Functionally, catalyzes the prenylation of para-hydroxybenzoate (PHB) with an all-trans polyprenyl group. Mediates the second step in the final reaction sequence of ubiquinone-8 (UQ-8) biosynthesis, which is the condensation of the polyisoprenoid side chain with PHB, generating the first membrane-bound Q intermediate 3-octaprenyl-4-hydroxybenzoate. The sequence is that of 4-hydroxybenzoate octaprenyltransferase from Enterobacter sp. (strain 638).